Reading from the N-terminus, the 92-residue chain is UPF0250 protein Rmag_0541 (92 aa).

It belongs to the UPF0250 family.

The chain is UPF0250 protein Rmag_0541 from Ruthia magnifica subsp. Calyptogena magnifica.